Reading from the N-terminus, the 305-residue chain is Translation initiation factor eIF2B subunit alpha (305 aa).

This sequence belongs to the eIF-2B alpha/beta/delta subunits family. In terms of assembly, component of the translation initiation factor 2B (eIF2B) complex which is a heterodecamer of two sets of five different subunits: alpha, beta, gamma, delta and epsilon. Subunits alpha, beta and delta comprise a regulatory subcomplex and subunits epsilon and gamma comprise a catalytic subcomplex. Within the complex, the hexameric regulatory complex resides at the center, with the two heterodimeric catalytic subcomplexes bound on opposite sides.

It localises to the cytoplasm. It is found in the cytosol. Acts as a component of the translation initiation factor 2B (eIF2B) complex, which catalyzes the exchange of GDP for GTP on eukaryotic initiation factor 2 (eIF2) gamma subunit. Its guanine nucleotide exchange factor activity is repressed when bound to eIF2 complex phosphorylated on the alpha subunit, thereby limiting the amount of methionyl-initiator methionine tRNA available to the ribosome and consequently global translation is repressed. In Caenorhabditis elegans, this protein is Translation initiation factor eIF2B subunit alpha.